An 80-amino-acid polypeptide reads, in one-letter code: Small ribosomal subunit protein bS18 (80 aa).

Belongs to the bacterial ribosomal protein bS18 family. In terms of assembly, part of the 30S ribosomal subunit. Forms a tight heterodimer with protein bS6.

In terms of biological role, binds as a heterodimer with protein bS6 to the central domain of the 16S rRNA, where it helps stabilize the platform of the 30S subunit. In Staphylococcus aureus (strain Mu3 / ATCC 700698), this protein is Small ribosomal subunit protein bS18.